The following is a 416-amino-acid chain: Formyl-CoA:oxalate CoA-transferase (416 aa).

Residues 17-18, arginine 38, 72-75, 96-98, histidine 104, and 137-140 each bind CoA; these read QS, LNTK, NFH, and KAYE. Aspartate 169 serves as the catalytic Nucleophile. 248 to 250 contacts substrate; the sequence is GGQ. CoA is bound at residue 273–275; that stretch reads QEQ.

The protein belongs to the CoA-transferase III family. Frc subfamily. In terms of assembly, homodimer.

The enzyme catalyses formyl-CoA + oxalate = oxalyl-CoA + formate. The protein operates within metabolic intermediate degradation; oxalate degradation; CO(2) and formate from oxalate: step 1/2. Functionally, involved in the catabolism of oxalate and in the adapatation to low pH via the induction of the oxalate-dependent acid tolerance response (ATR). Catalyzes the transfer of the CoA moiety from formyl-CoA to oxalate. The chain is Formyl-CoA:oxalate CoA-transferase from Escherichia coli O81 (strain ED1a).